Consider the following 553-residue polypeptide: MSLGGASERSVPATKIEITVSCRNLLDLDTFSKSDPMVVLYTQSRASQEWREFGRTEVIDNTLNPDFVRKFVLDYFFEEKQNLRFDVYNVDSKTNISKPKDFLGQAFLALGEVIGGQGSRVERTLTGVPGKKCGTILLTAEELSNCRDIATMQLCANKLDKKDFFGKSDPFLVFYRSNEDGTFTICHKTEVVKNTLNPVWQPFSIPVRALCNGDYDRTVKIDVYDWDRDGSHDFIGEFTTSYRELSKAQNQFTVYEVLNPRKKCKKKKYVNSGTVTLLSFSVDSEFTFVDYIKGGTQLNFTVAIDFTASNGNPLQPTSLHYMSPYQLSAYAMALKAVGEIIQDYDSDKLFPAYGFGAKLPPEGRISHQFPLNNNDEDPNCAGIEGVLESYFQSLRTVQLYGPTYFAPVINQVARAAAKISDGSQYYVLLIITDGVISDMTQTKEAIVSASSLPMSIIIVGVGPAMFEAMEELDGDDVRVSSRGRYAERDIVQFVPFRDYVDRSGNQVLSMARLAKDVLAEIPEQLLSYMRTRDIQPRPPPPANPSPIPAPEQP.

C2 domains are found at residues 1–125 (MSLG…ERTL) and 132–255 (KCGT…FTVY). Asn95 carries N-linked (GlcNAc...) asparagine glycosylation. Residues Asp163, Asp169, Asp225, Asp227, and Asp233 each contribute to the Ca(2+) site. A VWFA domain is found at 299–500 (NFTVAIDFTA…VQFVPFRDYV (202 aa)). Positions 531 to 553 (TRDIQPRPPPPANPSPIPAPEQP) are disordered. Residues 536 to 553 (PRPPPPANPSPIPAPEQP) show a composition bias toward pro residues.

This sequence belongs to the copine family. It depends on Ca(2+) as a cofactor. In terms of tissue distribution, expressed in melanocytes.

Functionally, probable calcium-dependent phospholipid-binding protein that may play a role in calcium-mediated intracellular processes. Plays a role in dendrite formation by melanocytes. This is Copine-9 from Homo sapiens (Human).